The following is a 374-amino-acid chain: Type II methyltransferase M.BbvI (374 aa).

The SAM-dependent MTase C5-type domain maps to 3 to 347 (FRKGELFCGP…EAVLKTFARI (345 aa)). Cys-92 is an active-site residue.

It belongs to the class I-like SAM-binding methyltransferase superfamily. C5-methyltransferase family.

It carries out the reaction a 2'-deoxycytidine in DNA + S-adenosyl-L-methionine = a 5-methyl-2'-deoxycytidine in DNA + S-adenosyl-L-homocysteine + H(+). A methylase, recognizes the double-stranded sequence 5'-GCAGC-3', methylates C-2 on both strands, and protects the DNA from cleavage by the BbvI endonuclease. The chain is Type II methyltransferase M.BbvI (bbvIM) from Brevibacillus brevis (Bacillus brevis).